A 97-amino-acid polypeptide reads, in one-letter code: Large ribosomal subunit protein uL23 (97 aa).

This sequence belongs to the universal ribosomal protein uL23 family. Part of the 50S ribosomal subunit. Contacts protein L29, and trigger factor when it is bound to the ribosome.

In terms of biological role, one of the early assembly proteins it binds 23S rRNA. One of the proteins that surrounds the polypeptide exit tunnel on the outside of the ribosome. Forms the main docking site for trigger factor binding to the ribosome. This is Large ribosomal subunit protein uL23 from Sinorhizobium medicae (strain WSM419) (Ensifer medicae).